The primary structure comprises 607 residues: Transporter aclS (607 aa).

Transmembrane regions (helical) follow at residues 67–87 (LGGSLVASSLSVWQTMVAVVL), 91–111 (IAAIVAILIGYIGAEWHIGFP), 152–172 (LTVVGFAFQSYTGGLCVTAIL), 192–212 (VTTQQIIGWAIFNIISIPVLY), 221–241 (LMIGMNIMSFAALLGIMIWSL), 262–282 (SLGFGIMQGITTVVGTLSIAL), 317–337 (VFGQWFTFIIIGSIMPLFGCL), 364–384 (AAAVFAGIGLVSSQLALNVVD), 423–443 (GCYVGLILGMALCPWELLASA), 445–465 (TFVSVISSFSIFMAPFCGIHI), 500–520 (GVLPWLVGWVPLLPGFMHSIN), and 531–551 (HLYALGFPYGLLSSMAIHTLV). The segment at 583-607 (NKDSTEEDSDRSLRRESREVVETKV) is disordered. The segment covering 592–607 (DRSLRRESREVVETKV) has biased composition (basic and acidic residues).

Belongs to the purine-cytosine permease (2.A.39) family.

The protein localises to the membrane. Functionally, transporter; part of the gene cluster that mediates the biosynthesis of aspirochlorine (or antibiotic A30641), an unusual halogenated spiro compound with distinctive antifungal properties due to selective inhibition of protein biosynthesis, and which is also active against bacteria, viruses, and murine tumor cells. The polypeptide is Transporter aclS (Aspergillus oryzae (strain ATCC 42149 / RIB 40) (Yellow koji mold)).